Here is a 445-residue protein sequence, read N- to C-terminus: tRNA-2-methylthio-N(6)-dimethylallyladenosine synthase (445 aa).

Residues 3–124 form the MTTase N-terminal domain; sequence KKLYIKTYGC…LPELISKVVR (122 aa). 6 residues coordinate [4Fe-4S] cluster: Cys12, Cys48, Cys87, Cys162, Cys166, and Cys169. Residues 148–380 form the Radical SAM core domain; that stretch reads YTQGASSFIS…QKELATQQLA (233 aa). The region spanning 383–445 is the TRAM domain; the sequence is ESCVGSTMKV…ALNSLTGEIL (63 aa).

This sequence belongs to the methylthiotransferase family. MiaB subfamily. As to quaternary structure, monomer. The cofactor is [4Fe-4S] cluster.

It localises to the cytoplasm. The enzyme catalyses N(6)-dimethylallyladenosine(37) in tRNA + (sulfur carrier)-SH + AH2 + 2 S-adenosyl-L-methionine = 2-methylsulfanyl-N(6)-dimethylallyladenosine(37) in tRNA + (sulfur carrier)-H + 5'-deoxyadenosine + L-methionine + A + S-adenosyl-L-homocysteine + 2 H(+). Functionally, catalyzes the methylthiolation of N6-(dimethylallyl)adenosine (i(6)A), leading to the formation of 2-methylthio-N6-(dimethylallyl)adenosine (ms(2)i(6)A) at position 37 in tRNAs that read codons beginning with uridine. In Rickettsia typhi (strain ATCC VR-144 / Wilmington), this protein is tRNA-2-methylthio-N(6)-dimethylallyladenosine synthase.